A 434-amino-acid chain; its full sequence is Putative MgpC-like protein MPN_149 (434 aa).

Disordered regions lie at residues 168–193 and 215–267; these read GSGQ…PKAV and EPLD…DNNG. The segment covering 170–184 has biased composition (polar residues); it reads GQESSWNSQRSQKVL. Positions 218–229 are enriched in basic and acidic residues; sequence DSTKDGKGKDES. Polar residues predominate over residues 248–267; the sequence is STGSQMAAVTDSQQSGDNNG.

The protein belongs to the MgpC family.

This Mycoplasma pneumoniae (strain ATCC 29342 / M129 / Subtype 1) (Mycoplasmoides pneumoniae) protein is Putative MgpC-like protein MPN_149.